A 363-amino-acid chain; its full sequence is Pyrimidine monooxygenase RutA (363 aa).

FMN is bound by residues 49–50 (IK), asparagine 115, glutamate 124, 140–141 (RY), and serine 190.

This sequence belongs to the NtaA/SnaA/DszA monooxygenase family. RutA subfamily.

It carries out the reaction uracil + FMNH2 + NADH + O2 = (Z)-3-ureidoacrylate + FMN + NAD(+) + H2O + H(+). The enzyme catalyses thymine + FMNH2 + NADH + O2 = (Z)-2-methylureidoacrylate + FMN + NAD(+) + H2O + H(+). Functionally, catalyzes the pyrimidine ring opening between N-3 and C-4 by an unusual flavin hydroperoxide-catalyzed mechanism, adding oxygen atoms in the process to yield ureidoacrylate peracid, that immediately reacts with FMN forming ureidoacrylate and FMN-N(5)-oxide. The FMN-N(5)-oxide reacts spontaneously with NADH to produce FMN. Requires the flavin reductase RutF to regenerate FMN in vivo. The chain is Pyrimidine monooxygenase RutA from Escherichia coli O157:H7 (strain EC4115 / EHEC).